Consider the following 280-residue polypeptide: uncharacterized protein (280 aa).

The 102-residue stretch at 26 to 127 folds into the KilA-N domain; sequence YFMSMKLLDV…TRVSILMRYY (102 aa).

This is an uncharacterized protein from Vertebrata (FPV).